The sequence spans 207 residues: Probable GTP-binding protein EngB (207 aa).

Residues 24–199 (GGYEVAFAGR…RGIVGGWLGL (176 aa)) enclose the EngB-type G domain. GTP is bound by residues 32 to 39 (GRSNAGKS), 59 to 63 (GRTQQ), 77 to 80 (DLPG), 144 to 147 (TKAD), and 178 to 180 (YSG). Mg(2+)-binding residues include serine 39 and threonine 61.

Belongs to the TRAFAC class TrmE-Era-EngA-EngB-Septin-like GTPase superfamily. EngB GTPase family. Mg(2+) is required as a cofactor.

In terms of biological role, necessary for normal cell division and for the maintenance of normal septation. This Xanthomonas campestris pv. campestris (strain 8004) protein is Probable GTP-binding protein EngB.